The primary structure comprises 549 residues: MFS-type transporter TwmF (549 aa).

The next 4 helical transmembrane spans lie at Ile29–Ile49, Asn63–Gly83, Val99–Ile119, and Gly126–Leu146. Asn151 carries an N-linked (GlcNAc...) asparagine glycan. The next 10 membrane-spanning stretches (helical) occupy residues Ile155 to Val175, Trp182 to Leu202, Leu221 to Ala241, Ser249 to Leu269, Ile291 to Leu311, Val328 to Leu348, Lys355 to Phe375, Ile390 to Ile410, Ala421 to Phe441, and Val502 to Leu522.

This sequence belongs to the major facilitator superfamily.

The protein localises to the membrane. In terms of biological role, MFS efflux transporter; part of the gene cluster that mediates the biosynthesis of wortmanamides A and B, reduced long-chain polyketides amidated with a specific omega-amino acid, 5-aminopentanoic acid (5PA). This Talaromyces wortmannii (Penicillium wortmannii) protein is MFS-type transporter TwmF.